A 138-amino-acid polypeptide reads, in one-letter code: Small ribosomal subunit protein uS11 (138 aa).

Residues 1–12 show a composition bias toward low complexity; that stretch reads MPPKKANAAGPK. Residues 1–23 are disordered; sequence MPPKKANAAGPKKGQKTRKREKK. Positions 13–22 are enriched in basic residues; that stretch reads KGQKTRKREK.

It belongs to the universal ribosomal protein uS11 family. As to quaternary structure, part of the 30S ribosomal subunit. Interacts with proteins S7 and S18. Binds to IF-3.

Located on the platform of the 30S subunit, it bridges several disparate RNA helices of the 16S rRNA. Forms part of the Shine-Dalgarno cleft in the 70S ribosome. In Mycobacterium leprae (strain Br4923), this protein is Small ribosomal subunit protein uS11.